The sequence spans 63 residues: Large ribosomal subunit protein bL28 (63 aa).

The protein belongs to the bacterial ribosomal protein bL28 family.

The chain is Large ribosomal subunit protein bL28 (rpmB) from Selenomonas ruminantium.